The following is a 316-amino-acid chain: Transaldolase (316 aa).

The active-site Schiff-base intermediate with substrate is the lysine 132.

This sequence belongs to the transaldolase family. Type 1 subfamily. Homodimer.

It localises to the cytoplasm. It carries out the reaction D-sedoheptulose 7-phosphate + D-glyceraldehyde 3-phosphate = D-erythrose 4-phosphate + beta-D-fructose 6-phosphate. It participates in carbohydrate degradation; pentose phosphate pathway; D-glyceraldehyde 3-phosphate and beta-D-fructose 6-phosphate from D-ribose 5-phosphate and D-xylulose 5-phosphate (non-oxidative stage): step 2/3. Functionally, transaldolase is important for the balance of metabolites in the pentose-phosphate pathway. This Methylobacillus flagellatus (strain ATCC 51484 / DSM 6875 / VKM B-1610 / KT) protein is Transaldolase.